The primary structure comprises 95 residues: Protein TusB (95 aa).

This sequence belongs to the DsrH/TusB family. As to quaternary structure, heterohexamer, formed by a dimer of trimers. The hexameric TusBCD complex contains 2 copies each of TusB, TusC and TusD. The TusBCD complex interacts with TusE.

The protein localises to the cytoplasm. Part of a sulfur-relay system required for 2-thiolation of 5-methylaminomethyl-2-thiouridine (mnm(5)s(2)U) at tRNA wobble positions. The protein is Protein TusB of Buchnera aphidicola subsp. Baizongia pistaciae (strain Bp).